The chain runs to 223 residues: Ribosomal RNA small subunit methyltransferase G (223 aa).

3 residues coordinate S-adenosyl-L-methionine: Gly-85, Phe-90, and Arg-154.

It belongs to the methyltransferase superfamily. RNA methyltransferase RsmG family.

Its subcellular location is the cytoplasm. The catalysed reaction is guanosine(527) in 16S rRNA + S-adenosyl-L-methionine = N(7)-methylguanosine(527) in 16S rRNA + S-adenosyl-L-homocysteine. Its function is as follows. Specifically methylates the N7 position of guanine in position 527 of 16S rRNA. The chain is Ribosomal RNA small subunit methyltransferase G from Rhodopseudomonas palustris (strain TIE-1).